Consider the following 302-residue polypeptide: N-acetylmuramic acid 6-phosphate etherase (302 aa).

The region spanning 58-221 (IGKAFLNGGR…STGAMVKTGK (164 aa)) is the SIS domain. Catalysis depends on E86, which acts as the Proton donor. E117 is a catalytic residue.

The protein belongs to the GCKR-like family. MurNAc-6-P etherase subfamily. In terms of assembly, homodimer.

The catalysed reaction is N-acetyl-D-muramate 6-phosphate + H2O = N-acetyl-D-glucosamine 6-phosphate + (R)-lactate. The protein operates within amino-sugar metabolism; N-acetylmuramate degradation. In terms of biological role, specifically catalyzes the cleavage of the D-lactyl ether substituent of MurNAc 6-phosphate, producing GlcNAc 6-phosphate and D-lactate. The polypeptide is N-acetylmuramic acid 6-phosphate etherase (Clostridium botulinum (strain Loch Maree / Type A3)).